A 139-amino-acid polypeptide reads, in one-letter code: Nucleoside diphosphate kinase (139 aa).

ATP is bound by residues K10, F58, R86, T92, R103, and N113. H116 acts as the Pros-phosphohistidine intermediate in catalysis.

It belongs to the NDK family. As to quaternary structure, homotetramer. Mg(2+) is required as a cofactor.

Its subcellular location is the cytoplasm. It carries out the reaction a 2'-deoxyribonucleoside 5'-diphosphate + ATP = a 2'-deoxyribonucleoside 5'-triphosphate + ADP. The catalysed reaction is a ribonucleoside 5'-diphosphate + ATP = a ribonucleoside 5'-triphosphate + ADP. In terms of biological role, major role in the synthesis of nucleoside triphosphates other than ATP. The ATP gamma phosphate is transferred to the NDP beta phosphate via a ping-pong mechanism, using a phosphorylated active-site intermediate. The protein is Nucleoside diphosphate kinase of Oleidesulfovibrio alaskensis (strain ATCC BAA-1058 / DSM 17464 / G20) (Desulfovibrio alaskensis).